The chain runs to 343 residues: MNIHRSTPITIARYGRSRNKTQDFEELSSIRSAEPSQSFSPNLGSPSPPETPNLSHCVSCIGKYLLLEPLEGDHVFRAVHLHSGEELVCKVFDISCYQESLAPCFCLSAHSNINQITEIILGETKAYVFFERSYGDMHSFVRTCKKLREEEAARLFYQIASAVAHCHDGGLVLRDLKLRKFIFKDEERTRVKLESLEDAYILRGDDDSLSDKHGCPAYVSPEILNTNGSYSGKAADVWSLGVMLYTMLVGRYPFHDIEPSSLFSKIRRGQFNIPETLSPKAKCLIRSILRREPSERLTSQEILDHPWFSTDFSVSNSGYGAKEVSDQLVPDVNMEETLDPFFN.

Residues 25 to 50 (EELSSIRSAEPSQSFSPNLGSPSPPE) form a disordered region. Polar residues predominate over residues 29-45 (SIRSAEPSQSFSPNLGS). The Protein kinase domain maps to 61–308 (IGKYLLLEPL…SQEILDHPWF (248 aa)).

The protein belongs to the protein kinase superfamily. CAMK Ser/Thr protein kinase family. Tribbles subfamily. Expressed in granulosa cells of the dominant follicles of the ovary and down-regulated in ovulatory follicles.

It is found in the cytoplasm. It localises to the cytoskeleton. Its function is as follows. Interacts with MAPK kinases and regulates activation of MAP kinases. Does not display kinase activity. In Bos taurus (Bovine), this protein is Tribbles homolog 2.